Reading from the N-terminus, the 469-residue chain is MPYTLSDAHHKLITSHLVDTDPEVDSIIKDEIERQKHSIDLIASENFTSTSVFDALGTPLSNKYSEGYPGARYYGGNEHIDRMEILCQQRALKAFHVTPDKWGVNVQTLSGSPANLQVYQAIMKPHERLMGLYLPDGGHLSHGYATENRKISAVSTYFESFPYRVNPETGIIDYDTLEKNAILYRPKVLVAGTSAYCRLIDYKRMREIADKCGAYLMVDMAHISGLIAAGVIPSPFEYADIVTTTTHKSLRGPRGAMIFFRRGVRSINPKTGKEVLYDLENPINFSVFPGHQGGPHNHTIAALATALKQAATPEFKEYQTQVLKNAKALESEFKNLGYRLVSNGTDSHMVLVSLREKGVDGARVEYICEKINIALNKNSIPGDKSALVPGGVRIGAPAMTTRGMGEEDFHRIVQYINKAVEFAQQVQQSLPKDACRLKDFKAKVDEGSDVLNTWKKEIYDWAGEYPLAV.

Phosphothreonine is present on Thr-20. The residue at position 26 (Ser-26) is a Phosphoserine. Lys-248 carries the N6-(pyridoxal phosphate)lysine modification. At Ser-429 the chain carries Phosphoserine. Lys-456 is covalently cross-linked (Glycyl lysine isopeptide (Lys-Gly) (interchain with G-Cter in ubiquitin)).

It belongs to the SHMT family. Homotetramer. It depends on pyridoxal 5'-phosphate as a cofactor.

It localises to the cytoplasm. The catalysed reaction is (6R)-5,10-methylene-5,6,7,8-tetrahydrofolate + glycine + H2O = (6S)-5,6,7,8-tetrahydrofolate + L-serine. It participates in one-carbon metabolism; tetrahydrofolate interconversion. Functionally, interconversion of serine and glycine. The chain is Serine hydroxymethyltransferase, cytosolic from Saccharomyces cerevisiae (strain ATCC 204508 / S288c) (Baker's yeast).